The primary structure comprises 1102 residues: Phosphatidylinositol 4,5-bisphosphate 3-kinase catalytic subunit gamma isoform (1102 aa).

The PI3K-ABD domain occupies 34 to 141; that stretch reads SMELIPIEFV…PGQIHVVQRH (108 aa). Residues 217 to 309 enclose the PI3K-RBD domain; sequence NNCVFIVIHR…GEEIHLVLDT (93 aa). Positions 357–521 constitute a C2 PI3K-type domain; the sequence is CDRKFRVKIR…NSMSISILLD (165 aa). The region spanning 541–723 is the PIK helical domain; the sequence is DRVRAEMPNQ…AVILEAYLRG (183 aa). A PI3K/PI4K catalytic domain is found at 797–1080; that stretch reads VIEKCKVMAS…QIEVCRDKGW (284 aa). The interval 803–809 is G-loop; sequence VMASKKK. Residues 829 to 838 and 864 to 872 contribute to the ATP site; these read GIIFKHGDDL and LLPYGCIST. Residues 943–951 are catalytic loop; it reads GIGDRHNDN. Residue 961-969 coordinates ATP; the sequence is FHIDFGHIL. The tract at residues 962–988 is activation loop; the sequence is HIDFGHILGNYKSFLGINKERVPFVLT. Residue threonine 1024 is modified to Phosphothreonine; by PKA. Serine 1101 carries the phosphoserine; by autocatalysis modification.

Belongs to the PI3/PI4-kinase family. As to quaternary structure, heterodimer of a catalytic subunit PIK3CG and a PIK3R5 or PIK3R6 regulatory subunit. Interacts with GRK2 through the PIK helical domain. Interaction with GRK2 is required for targeting to agonist-occupied receptor. Interacts with PDE3B; regulates PDE3B activity and thereby cAMP levels in cells. Interacts with TPM2. Interacts with EPHA8; regulates integrin-mediated cell adhesion to substrate. Interacts with HRAS; the interaction is required for membrane recruitment and beta-gamma G protein dimer-dependent activation of the PI3K gamma complex PIK3CG:PIK3R6. Autophosphorylation at Ser-1101 has no effect on the phosphatidylinositol-4,5-bisphosphate 3-kinase activity.

The protein localises to the cytoplasm. The protein resides in the cell membrane. The catalysed reaction is a 1,2-diacyl-sn-glycero-3-phospho-(1D-myo-inositol-4,5-bisphosphate) + ATP = a 1,2-diacyl-sn-glycero-3-phospho-(1D-myo-inositol-3,4,5-trisphosphate) + ADP + H(+). It catalyses the reaction a 1,2-diacyl-sn-glycero-3-phospho-(1D-myo-inositol) + ATP = a 1,2-diacyl-sn-glycero-3-phospho-(1D-myo-inositol-3-phosphate) + ADP + H(+). The enzyme catalyses a 1,2-diacyl-sn-glycero-3-phospho-(1D-myo-inositol 4-phosphate) + ATP = a 1,2-diacyl-sn-glycero-3-phospho-(1D-myo-inositol-3,4-bisphosphate) + ADP + H(+). It carries out the reaction L-seryl-[protein] + ATP = O-phospho-L-seryl-[protein] + ADP + H(+). The protein operates within phospholipid metabolism; phosphatidylinositol phosphate biosynthesis. Activated by both the alpha and the beta-gamma G proteins following stimulation of G protein-coupled receptors (GPCRs). Activation by GPCRs is assisted by the regulatory subunits (PIK3R5 or PIK3R6) leading to the translocation from the cytosol to the plasma membrane and to kinase activation. When bound to PIK3R5 the PI3K activity of PIK3CG could be activated greater than 100-fold by the beta-gamma G proteins. In terms of biological role, phosphoinositide-3-kinase (PI3K) that phosphorylates PtdIns(4,5)P2 (Phosphatidylinositol 4,5-bisphosphate) to generate phosphatidylinositol 3,4,5-trisphosphate (PIP3). PIP3 plays a key role by recruiting PH domain-containing proteins to the membrane, including AKT1 and PDPK1, activating signaling cascades involved in cell growth, survival, proliferation, motility and morphology. Links G-protein coupled receptor activation to PIP3 production. Involved in immune, inflammatory and allergic responses. Modulates leukocyte chemotaxis to inflammatory sites and in response to chemoattractant agents. May control leukocyte polarization and migration by regulating the spatial accumulation of PIP3 and by regulating the organization of F-actin formation and integrin-based adhesion at the leading edge. Controls motility of dendritic cells. Participates in T-lymphocyte migration. Regulates T-lymphocyte proliferation and cytokine production. Required for B-lymphocyte development and signaling. Together with other PI3Ks are involved in the oxidative burst produced by neutrophils in response to chemotactic agents. Together with PIK3CD regulate neutrophil extravasation. Together with PIK3CB promotes platelet aggregation and thrombosis. Regulates alpha-IIb/beta-3 integrins (ITGA2B/ ITGB3) adhesive function in platelets downstream of P2Y12 through a lipid kinase activity-independent mechanism. May have also a lipid kinase activity-dependent function in platelet aggregation. Involved in endothelial progenitor cell migration. Negative regulator of cardiac contractility. Modulates cardiac contractility by anchoring protein kinase A (PKA) and PDE3B activation, reducing cAMP levels. Regulates cardiac contractility also by promoting beta-adrenergic receptor internalization by binding to GRK2 and by non-muscle tropomyosin phosphorylation. Also has serine/threonine protein kinase activity: both lipid and protein kinase activities are required for beta-adrenergic receptor endocytosis. May also have a scaffolding role in modulating cardiac contractility. Contribute to cardiac hypertrophy under pathological stress. Through simultaneous binding of PDE3B to RAPGEF3 and PIK3R6 is assembled in a signaling complex in which the PI3K gamma complex is activated by RAPGEF3 and which is involved in angiogenesis. In neutrophils, participates in a phospholipase C-activating N-formyl peptide-activated GPCR (G protein-coupled receptor) signaling pathway downstream of RASGRP4-mediated Ras-activation, to promote neutrophil functional responses. The chain is Phosphatidylinositol 4,5-bisphosphate 3-kinase catalytic subunit gamma isoform (PIK3CG) from Sus scrofa (Pig).